The chain runs to 60 residues: Large ribosomal subunit protein bL32 (60 aa).

Residues 1–16 are compositionally biased toward basic residues; sequence MPNPKRRHSKKRTSTR. The disordered stretch occupies residues 1-28; it reads MPNPKRRHSKKRTSTRRAHDALKQPGLS.

This sequence belongs to the bacterial ribosomal protein bL32 family.

In Solibacter usitatus (strain Ellin6076), this protein is Large ribosomal subunit protein bL32.